The primary structure comprises 220 residues: Deoxyribose-phosphate aldolase (220 aa).

The active-site Proton donor/acceptor is the D89. K150 acts as the Schiff-base intermediate with acetaldehyde in catalysis. The active-site Proton donor/acceptor is the K182.

This sequence belongs to the DeoC/FbaB aldolase family. DeoC type 1 subfamily.

The protein localises to the cytoplasm. It carries out the reaction 2-deoxy-D-ribose 5-phosphate = D-glyceraldehyde 3-phosphate + acetaldehyde. The protein operates within carbohydrate degradation; 2-deoxy-D-ribose 1-phosphate degradation; D-glyceraldehyde 3-phosphate and acetaldehyde from 2-deoxy-alpha-D-ribose 1-phosphate: step 2/2. Its function is as follows. Catalyzes a reversible aldol reaction between acetaldehyde and D-glyceraldehyde 3-phosphate to generate 2-deoxy-D-ribose 5-phosphate. This is Deoxyribose-phosphate aldolase from Mycoplasmoides pirum (Mycoplasma pirum).